Reading from the N-terminus, the 389-residue chain is Cytochrome B translational activator CBS2 (389 aa).

It localises to the mitochondrion. Functionally, translational activator of cytochrome b. The cytochrome b (coB) leader RNA may represent the target sequence for CBS1 and/ or CBS2. This chain is Cytochrome B translational activator CBS2 (CBS2), found in Saccharomyces cerevisiae (strain ATCC 204508 / S288c) (Baker's yeast).